The chain runs to 309 residues: Glycine--tRNA ligase alpha subunit (309 aa).

It belongs to the class-II aminoacyl-tRNA synthetase family. Tetramer of two alpha and two beta subunits.

Its subcellular location is the cytoplasm. It carries out the reaction tRNA(Gly) + glycine + ATP = glycyl-tRNA(Gly) + AMP + diphosphate. This Anaeromyxobacter sp. (strain K) protein is Glycine--tRNA ligase alpha subunit.